The chain runs to 1338 residues: Serine/threonine-protein kinase cek1 (1338 aa).

The PAS domain occupies 28-98; sequence SKDENLQPSI…RAVNCLLKDD (71 aa). The tract at residues 484–554 is disordered; that stretch reads PDFAIGSPMS…GRSSLFSRGR (71 aa). Residues 491-501 show a composition bias toward polar residues; the sequence is PMSQDSSNYSS. Phosphoserine is present on S525. The segment covering 541–550 has biased composition (polar residues); that stretch reads PASNGRSSLF. The Protein kinase domain occupies 589 to 958; that stretch reads YKILKPISKG…VEEIKAHPFF (370 aa). Residues 595-603 and K618 contribute to the ATP site; that span reads ISKGAFGSV. D713 (proton acceptor) is an active-site residue. At S748 the chain carries Phosphoserine. The span at 813-842 shows a compositional bias: polar residues; sequence ENSAEDSPTATNTPTSQVDESNIFRSTDSP. 3 disordered regions span residues 813 to 844, 1010 to 1035, and 1159 to 1185; these read ENSA…SPRV, KLEE…LRSN, and SSTM…TSSD. The AGC-kinase C-terminal domain maps to 959 to 1057; that stretch reads KSVNWDTILE…RNLDFLNKAN (99 aa). A compositionally biased stretch (low complexity) spans 1159–1174; it reads SSTMSASQSQSSMHTA. S1211 carries the phosphoserine modification.

It belongs to the protein kinase superfamily. Ser/Thr protein kinase family.

The enzyme catalyses L-seryl-[protein] + ATP = O-phospho-L-seryl-[protein] + ADP + H(+). It carries out the reaction L-threonyl-[protein] + ATP = O-phospho-L-threonyl-[protein] + ADP + H(+). Its function is as follows. May facilitate the progression of anaphase through direct or indirect interaction with the cut8 protein. This Schizosaccharomyces pombe (strain 972 / ATCC 24843) (Fission yeast) protein is Serine/threonine-protein kinase cek1 (cek1).